Here is a 130-residue protein sequence, read N- to C-terminus: MARQIKKSGARKNKHNAVNGITHIKSTFNNTIVTITNLKGETLSWSSSGASGFKGAKKGTPFAAQTAAEKAAKQAMDQGMRQTEVLVNGPGAGRETAIRALQAAGLEITLIKDITPVPHNGCRPPKKRRV.

This sequence belongs to the universal ribosomal protein uS11 family. In terms of assembly, part of the 30S ribosomal subunit.

The protein resides in the plastid. It localises to the chloroplast. This chain is Small ribosomal subunit protein uS11c, found in Porphyra purpurea (Red seaweed).